Here is a 491-residue protein sequence, read N- to C-terminus: Glutamyl-tRNA(Gln) amidotransferase subunit A (491 aa).

Catalysis depends on charge relay system residues Lys81 and Ser156. The Acyl-ester intermediate role is filled by Ser180.

This sequence belongs to the amidase family. GatA subfamily. In terms of assembly, heterotrimer of A, B and C subunits.

It carries out the reaction L-glutamyl-tRNA(Gln) + L-glutamine + ATP + H2O = L-glutaminyl-tRNA(Gln) + L-glutamate + ADP + phosphate + H(+). Its function is as follows. Allows the formation of correctly charged Gln-tRNA(Gln) through the transamidation of misacylated Glu-tRNA(Gln) in organisms which lack glutaminyl-tRNA synthetase. The reaction takes place in the presence of glutamine and ATP through an activated gamma-phospho-Glu-tRNA(Gln). The sequence is that of Glutamyl-tRNA(Gln) amidotransferase subunit A from Alcanivorax borkumensis (strain ATCC 700651 / DSM 11573 / NCIMB 13689 / SK2).